Here is a 355-residue protein sequence, read N- to C-terminus: Uroporphyrinogen decarboxylase (355 aa).

Substrate is bound by residues 36 to 40 (RQAGR), D85, Y160, S215, and H334.

Belongs to the uroporphyrinogen decarboxylase family. In terms of assembly, homodimer.

The protein resides in the cytoplasm. The enzyme catalyses uroporphyrinogen III + 4 H(+) = coproporphyrinogen III + 4 CO2. The protein operates within porphyrin-containing compound metabolism; protoporphyrin-IX biosynthesis; coproporphyrinogen-III from 5-aminolevulinate: step 4/4. Functionally, catalyzes the decarboxylation of four acetate groups of uroporphyrinogen-III to yield coproporphyrinogen-III. The protein is Uroporphyrinogen decarboxylase of Rhodococcus erythropolis (strain PR4 / NBRC 100887).